Consider the following 97-residue polypeptide: Small ribosomal subunit protein bS6 (97 aa).

The protein belongs to the bacterial ribosomal protein bS6 family.

Functionally, binds together with bS18 to 16S ribosomal RNA. This Lactococcus lactis subsp. cremoris (strain MG1363) protein is Small ribosomal subunit protein bS6.